The following is a 107-amino-acid chain: MMKVLVVVALLVTLISYSSSEGIDDLEADELLSLMANEQTRKECIPKHHECTSNKHGCCRGNFFKCKCQCTTVVTQDGEQTERCFCGTPPHHKAAELVVGFGKKIFG.

A signal peptide spans 1–20 (MMKVLVVVALLVTLISYSSS). A propeptide spanning residues 21–41 (EGIDDLEADELLSLMANEQTR) is cleaved from the precursor. 4 disulfides stabilise this stretch: Cys44-Cys59, Cys51-Cys68, Cys58-Cys86, and Cys70-Cys84.

The protein belongs to the neurotoxin 19 (CSTX) family. 04 (U1-Lctx) subfamily. Expressed by the venom gland.

The protein localises to the secreted. The sequence is that of U1-lycotoxin-Ls1m from Lycosa singoriensis (Wolf spider).